Consider the following 118-residue polypeptide: Non-specific lipid-transfer protein 1 (118 aa).

The signal sequence occupies residues 1–20; that stretch reads MARLAVAIAVVAAVVVVLAA. 4 cysteine pairs are disulfide-bonded: Cys-29–Cys-77, Cys-39–Cys-54, Cys-55–Cys-100, and Cys-75–Cys-114.

This sequence belongs to the plant LTP family.

Functionally, plant non-specific lipid-transfer proteins transfer phospholipids as well as galactolipids across membranes. May play a role in wax or cutin deposition in the cell walls of expanding epidermal cells and certain secretory tissues. The protein is Non-specific lipid-transfer protein 1 (LTP1) of Sorghum bicolor (Sorghum).